The following is a 399-amino-acid chain: MTRNIRVEELTQRPVEKQKIEVVERKGLGHPDSVADGIAEEISRALCKEYIERFGRVLHHNTDKIQIVAGRSRPAFGGGEVIQPQYILLTGRATRVCGDVEVPVDAIALRTARNHLKRALRNLDLDTHVIIDCKIGTGSADLCDIFDRDASTVPSANDTSYGVGYAPLSETERIVYSTEQELLSLRSRIPAIGEDIKVMGLREDDTIYLTIACAMVDRYIDDLDHYVETKKEIVEEISAKAQSMTRRRVDVQMNVGDNIATGSVYITVTGTSAEMGDDGAVGRGNRANGLITPNRPMSLEATSGKNPINHVGKIYNLLSNLIAKEIAEEVDGVEEVYVKILSQIGKPISQPHIASVQLVLKEGVRLSSAHARAREITDRWLEDIPRVQQMIFHGELQTY.

136 to 141 (GTGSAD) contacts ATP.

The protein belongs to the AdoMet synthase 2 family. Requires Mg(2+) as cofactor.

It catalyses the reaction L-methionine + ATP + H2O = S-adenosyl-L-methionine + phosphate + diphosphate. It functions in the pathway amino-acid biosynthesis; S-adenosyl-L-methionine biosynthesis; S-adenosyl-L-methionine from L-methionine: step 1/1. Functionally, catalyzes the formation of S-adenosylmethionine from methionine and ATP. This chain is S-adenosylmethionine synthase, found in Methanothrix thermoacetophila (strain DSM 6194 / JCM 14653 / NBRC 101360 / PT) (Methanosaeta thermophila).